The chain runs to 125 residues: Large ribosomal subunit protein bL12 (125 aa).

The protein belongs to the bacterial ribosomal protein bL12 family. In terms of assembly, homodimer. Part of the ribosomal stalk of the 50S ribosomal subunit. Forms a multimeric L10(L12)X complex, where L10 forms an elongated spine to which 2 to 4 L12 dimers bind in a sequential fashion. Binds GTP-bound translation factors.

Its function is as follows. Forms part of the ribosomal stalk which helps the ribosome interact with GTP-bound translation factors. Is thus essential for accurate translation. This Afipia carboxidovorans (strain ATCC 49405 / DSM 1227 / KCTC 32145 / OM5) (Oligotropha carboxidovorans) protein is Large ribosomal subunit protein bL12.